Reading from the N-terminus, the 722-residue chain is Polyribonucleotide nucleotidyltransferase (722 aa).

Mg(2+) contacts are provided by aspartate 486 and aspartate 492. The region spanning 553–612 (PRITTIQIRPEFIKNVIGPGGKVIKDIIARTGAAINIEDSGRVDIASANGEAVKAAIAMI) is the KH domain. In terms of domain architecture, S1 motif spans 622 to 690 (GKIYTGTVRK…KTGKIRLSRK (69 aa)). The tract at residues 696–722 (RAAQQGAAAGEAAAQPAPAPTQPDAKA) is disordered.

This sequence belongs to the polyribonucleotide nucleotidyltransferase family. Requires Mg(2+) as cofactor.

The protein resides in the cytoplasm. It catalyses the reaction RNA(n+1) + phosphate = RNA(n) + a ribonucleoside 5'-diphosphate. In terms of biological role, involved in mRNA degradation. Catalyzes the phosphorolysis of single-stranded polyribonucleotides processively in the 3'- to 5'-direction. This chain is Polyribonucleotide nucleotidyltransferase, found in Myxococcus xanthus (strain DK1622).